Reading from the N-terminus, the 263-residue chain is Tryptophan synthase alpha chain (263 aa).

Active-site proton acceptor residues include Glu-51 and Asp-62.

This sequence belongs to the TrpA family. Tetramer of two alpha and two beta chains.

It carries out the reaction (1S,2R)-1-C-(indol-3-yl)glycerol 3-phosphate + L-serine = D-glyceraldehyde 3-phosphate + L-tryptophan + H2O. It functions in the pathway amino-acid biosynthesis; L-tryptophan biosynthesis; L-tryptophan from chorismate: step 5/5. In terms of biological role, the alpha subunit is responsible for the aldol cleavage of indoleglycerol phosphate to indole and glyceraldehyde 3-phosphate. The polypeptide is Tryptophan synthase alpha chain (Methanosarcina barkeri (strain Fusaro / DSM 804)).